We begin with the raw amino-acid sequence, 849 residues long: G-type lectin S-receptor-like serine/threonine-protein kinase At4g11900 (849 aa).

The N-terminal stretch at 1–26 (MQICKKNVFLLYYGVLVFLSFQVSSS) is a signal peptide. The Bulb-type lectin domain occupies 27–180 (TDTISTNQPL…PNSSAAVLWQ (154 aa)). Over 27-466 (TDTISTNQPL…RKTEHSKGKS (440 aa)) the chain is Extracellular. N-linked (GlcNAc...) asparagine glycans are attached at residues asparagine 111, asparagine 148, asparagine 172, and asparagine 232. The EGF-like domain occupies 311–348 (PDNRCDVYNSCGSFGICNENREPPPCRCVPGFKREFSQ). 4 disulfides stabilise this stretch: cysteine 315–cysteine 327, cysteine 321–cysteine 336, cysteine 401–cysteine 421, and cysteine 405–cysteine 411. The PAN domain occupies 368 to 447 (CYKRNDEFLP…KGHTFFLRLA (80 aa)). Asparagine 450 is a glycosylation site (N-linked (GlcNAc...) asparagine). The helical transmembrane segment at 467 to 487 (IVLPLVLASLVATAACFVGLY) threads the bilayer. Residues 488-849 (CCISSRIRRK…EATQTELEAR (362 aa)) are Cytoplasmic-facing. Residues 537 to 822 (FSRKKKLGEG…TLPIPKQPTF (286 aa)) enclose the Protein kinase domain. ATP-binding positions include 543 to 551 (LGEGGFGPV) and lysine 565. Serine 571 carries the post-translational modification Phosphoserine. Residues 626–643 (LKSRELDWETRMKIVNGT) form a caM-binding region. Aspartate 662 serves as the catalytic Proton acceptor. Residues serine 666 and serine 679 each carry the phosphoserine modification. Threonine 696 carries the post-translational modification Phosphothreonine. Serine 837 carries the phosphoserine modification. Threonine 844 carries the phosphothreonine modification.

This sequence belongs to the protein kinase superfamily. Ser/Thr protein kinase family.

Its subcellular location is the cell membrane. It catalyses the reaction L-seryl-[protein] + ATP = O-phospho-L-seryl-[protein] + ADP + H(+). It carries out the reaction L-threonyl-[protein] + ATP = O-phospho-L-threonyl-[protein] + ADP + H(+). This is G-type lectin S-receptor-like serine/threonine-protein kinase At4g11900 from Arabidopsis thaliana (Mouse-ear cress).